The sequence spans 1215 residues: Cellulose synthase-like protein D4 (1215 aa).

Disordered regions lie at residues 24–46 (GGDAVVRRGSGLTSPVPRHSLGS) and 206–231 (SDTDESDSVTDDDDDEAVSSSEERDQ). A compositionally biased stretch (acidic residues) spans 207–222 (DTDESDSVTDDDDDEA). 2 helical membrane-spanning segments follow: residues 321–341 (AILSPYRLLIAIRLVALGFFL) and 352–372 (AVWLWAMSVACEVWFAFSWLL). Active-site residues include D452 and D905. 6 helical membrane-spanning segments follow: residues 988–1008 (VFLLAYCLLPAVSLFSGKFIV), 1014–1034 (TFLAFLLVITLTLCLLALLEI), 1060–1080 (PAAVLQGLLKVIAGVDISFTL), 1114–1134 (LMVPPVTIMMVNAVAIAVAAA), 1147–1167 (LLGGAFFSFWVLCHLYPFAKG), and 1177–1197 (TIVFVWSGLISMIISLLWVYI).

The protein belongs to the glycosyltransferase 2 family. Plant cellulose synthase-like D subfamily.

The protein localises to the golgi apparatus membrane. In terms of biological role, thought to be a Golgi-localized beta-glycan synthase that polymerize the backbones of noncellulosic polysaccharides (hemicelluloses) of plant cell wall. The sequence is that of Cellulose synthase-like protein D4 (CSLD4) from Oryza sativa subsp. japonica (Rice).